Reading from the N-terminus, the 135-residue chain is ATP synthase epsilon chain (135 aa).

The protein belongs to the ATPase epsilon chain family. F-type ATPases have 2 components, CF(1) - the catalytic core - and CF(0) - the membrane proton channel. CF(1) has five subunits: alpha(3), beta(3), gamma(1), delta(1), epsilon(1). CF(0) has three main subunits: a, b and c.

The protein resides in the cell inner membrane. Functionally, produces ATP from ADP in the presence of a proton gradient across the membrane. In Rhizobium leguminosarum bv. trifolii (strain WSM2304), this protein is ATP synthase epsilon chain.